The primary structure comprises 85 residues: Large ribosomal subunit protein bL27 (85 aa).

The tract at residues methionine 1 to glycine 22 is disordered.

Belongs to the bacterial ribosomal protein bL27 family.

The protein is Large ribosomal subunit protein bL27 of Teredinibacter turnerae (strain ATCC 39867 / T7901).